Here is a 335-residue protein sequence, read N- to C-terminus: MNELTYLQTMPKQTALLKTHCADFVVKEQLGYEMSGDGEFVAVKVRKTDCNTLFVAEKLAHFAGIPAKNMGYAGLKDRKAITEQWFCLQMPGQPTPDFNQFQLDGVEILEVTRHNRKIRTGSLDGNHFEILLREAQENADLKVRLENIKKNGFPNYFTEQRFGRDGHNLTQALRWAKGEINVKDRKKRSFYLSAARSEIFNLIVSARIRQGLHHKILVNDILQLSGSHSWFHADQKEDFNLLQQRLAQQDIQITAPLIGENVQIASDVENEIIAKHQELLYLMHQEKMKSARRPILMQAQHLSWSFIPEGLKLTFYLPAGSYATALVRELVNINE.

Catalysis depends on Asp-77, which acts as the Nucleophile. A TRUD domain is found at 152–308 (GFPNYFTEQR…AQHLSWSFIP (157 aa)).

Belongs to the pseudouridine synthase TruD family.

The catalysed reaction is uridine(13) in tRNA = pseudouridine(13) in tRNA. Responsible for synthesis of pseudouridine from uracil-13 in transfer RNAs. This is tRNA pseudouridine synthase D from Histophilus somni (strain 129Pt) (Haemophilus somnus).